Here is a 60-residue protein sequence, read N- to C-terminus: UPF0434 protein YcaR (60 aa).

Belongs to the UPF0434 family.

The polypeptide is UPF0434 protein YcaR (Salmonella agona (strain SL483)).